Reading from the N-terminus, the 285-residue chain is Energy-coupling factor transporter ATP-binding protein EcfA2 (285 aa).

The region spanning 6–242 (LKVEELNYNY…KEVIRKVNLR (237 aa)) is the ABC transporter domain. 39–46 (GGNGVGKS) provides a ligand contact to ATP.

The protein belongs to the ABC transporter superfamily. Energy-coupling factor EcfA family. In terms of assembly, forms a stable energy-coupling factor (ECF) transporter complex composed of 2 membrane-embedded substrate-binding proteins (S component), 2 ATP-binding proteins (A component) and 2 transmembrane proteins (T component).

Its subcellular location is the cell membrane. ATP-binding (A) component of a common energy-coupling factor (ECF) ABC-transporter complex. Unlike classic ABC transporters this ECF transporter provides the energy necessary to transport a number of different substrates. The chain is Energy-coupling factor transporter ATP-binding protein EcfA2 from Clostridium perfringens (strain SM101 / Type A).